The primary structure comprises 236 residues: Small ribosomal subunit protein uS5 (236 aa).

The S5 DRBM domain occupies 61–124 (ENQEIIDIAL…NYAKLNIIEI (64 aa)).

The protein belongs to the universal ribosomal protein uS5 family. In terms of assembly, part of the 30S ribosomal subunit. Contacts protein S4.

Functionally, with S4 and S12 plays an important role in translational accuracy. This is Small ribosomal subunit protein uS5 from Pyrococcus horikoshii (strain ATCC 700860 / DSM 12428 / JCM 9974 / NBRC 100139 / OT-3).